The primary structure comprises 569 residues: Adenine deaminase (569 aa).

Belongs to the metallo-dependent hydrolases superfamily. Adenine deaminase family. Mn(2+) serves as cofactor.

It catalyses the reaction adenine + H2O + H(+) = hypoxanthine + NH4(+). The polypeptide is Adenine deaminase (Desulfitobacterium hafniense (strain Y51)).